Here is a 952-residue protein sequence, read N- to C-terminus: Protein translocase subunit SecA (952 aa).

ATP-binding positions include glutamine 135, 153-157 (GEGKT), and aspartate 575. Low complexity predominate over residues 916-930 (VSAKAATQPAAPAAK). A disordered region spans residues 916–952 (VSAKAATQPAAPAAKEVGRNDPCPCGSGKKYKKCCGK). Residues cysteine 938, cysteine 940, cysteine 949, and cysteine 950 each coordinate Zn(2+).

It belongs to the SecA family. As to quaternary structure, monomer and homodimer. Part of the essential Sec protein translocation apparatus which comprises SecA, SecYEG and auxiliary proteins SecDF. Other proteins may also be involved. The cofactor is Zn(2+).

Its subcellular location is the cell membrane. It localises to the cytoplasm. It carries out the reaction ATP + H2O + cellular proteinSide 1 = ADP + phosphate + cellular proteinSide 2.. Part of the Sec protein translocase complex. Interacts with the SecYEG preprotein conducting channel. Has a central role in coupling the hydrolysis of ATP to the transfer of proteins into and across the cell membrane, serving as an ATP-driven molecular motor driving the stepwise translocation of polypeptide chains across the membrane. This chain is Protein translocase subunit SecA, found in Dehalococcoides mccartyi (strain ATCC BAA-2266 / KCTC 15142 / 195) (Dehalococcoides ethenogenes (strain 195)).